A 481-amino-acid chain; its full sequence is MSAAEGPLVVGVDTSTQSTKALVVDVATGRVVASGQAPHTVTSGAGRESDPRQWWDALCEALRQCGEAAHEAAAVSIGGQQHGLVTLDGHGEPVRPALLWNDVRSAPQGHRLIEELGGAKFWAERTGSVPAASFTVTKWAWLAEHEPEAVRATRAVRLPHDYLTERLTGQGTTDRGDASGTGWWASGTEAYDEEILGHVGLDPALLPRVVRPGEVAGTVRDSHELPFSKGTLVACGTGDNAAAALGLGVRPGTPVMSLGTSGTVYAVTQRRPADPTGTVAGFADARGDWLPLACTLNCTLAVDRVAALLGLDREAVEPGHGVTLLPFLDGERTPNLPRSSGLLHGLRHDTTGGQLLQAAYDGAVYSLLAALDLVLDEDADPSAPLLLIGGGARGTAWQQTVRRLSGRAVQVPRAAELVALGAAAQAAGLLTGEDPAAVARRWETAAGPVLEAVERDEETLDRLAGVLSDAAPLLERGTGAG.

81 to 82 lines the substrate pocket; the sequence is QH. Catalysis depends on aspartate 239, which acts as the Proton acceptor.

The protein belongs to the FGGY kinase family.

It catalyses the reaction D-xylulose + ATP = D-xylulose 5-phosphate + ADP + H(+). In terms of biological role, catalyzes the phosphorylation of D-xylulose to D-xylulose 5-phosphate. The protein is Xylulose kinase of Streptomyces rubiginosus.